Reading from the N-terminus, the 314-residue chain is DNA-directed RNA polymerase subunit alpha (314 aa).

Residues 1 to 228 (MIEIEKPKIE…EHLNIFVGLT (228 aa)) form an alpha N-terminal domain (alpha-NTD) region. Residues 245–314 (KEKVMEMTIE…DLGLGLRDDD (70 aa)) are alpha C-terminal domain (alpha-CTD).

This sequence belongs to the RNA polymerase alpha chain family. As to quaternary structure, homodimer. The RNAP catalytic core consists of 2 alpha, 1 beta, 1 beta' and 1 omega subunit. When a sigma factor is associated with the core the holoenzyme is formed, which can initiate transcription.

The catalysed reaction is RNA(n) + a ribonucleoside 5'-triphosphate = RNA(n+1) + diphosphate. Functionally, DNA-dependent RNA polymerase catalyzes the transcription of DNA into RNA using the four ribonucleoside triphosphates as substrates. The chain is DNA-directed RNA polymerase subunit alpha from Oceanobacillus iheyensis (strain DSM 14371 / CIP 107618 / JCM 11309 / KCTC 3954 / HTE831).